Reading from the N-terminus, the 1187-residue chain is MAGHEVQYGKHRTRRSFSRIKEVLDLPNLIEIQTDSFKDFLDTGLKEVFEDVLPISNFTDTMELEFVGYELKEPKYTLEEARAHDAHYSAPIFVTFRLINKETGEIKTQEVFFGDFPLMTEMGTFIINGAERIIVSQLVRSPGVYFNDKVDKNGKIGYGSTVIPNRGAWLELETDSKDIAYTRIDRTRKIPFTTLVRALGFSGDDEIIDIFGDSELVRNTIEKDIHKNPNDSRTDEALKEIYERLRPGEPKTADSSRSLLIARFFDARRYDLAAVGRYKINKKLNVKTRLLNQVIAENLVDPETGEILVEAGTEMTRSVIDSIADYLDGDLNKIVYTPNEYAVLTEPVVLQKFKVMAPNDPDRTVTVIGNASPDDKVRHLTPADILAEMSYFLNLAEGLGKVDDIDHLGNRRIRAVGELLANQFRIGLARMERNVRERMSVQDNEVLTPQQIINIRPVTAAIKEFFGSSQLSQFMDQHNPLSELSHKRRLSALGPGGLTRDRAGYEVRDVHYTHYGRMCPIETPEGPNIGLINNLSSYGHLNKYGFIQTPYRKVDRETGKVTNEIEWLTADEEDEFTVAQANSKLNEDGSFAEEIVMGRHQGNNQEFPASSVEYMDVSPKQVVAVATACIPFLENDDSNRALMGANMQRQAVPLIDPKAPFVGTGMEYQAAHDSGAAIIAQHNGKVVYSDADKIEVRREDGSLDVYHVTKFRRSNSGTAYNQRTLVRVGDSVEKGDFIADGPSMEKGEMALGQNPVVAYMTWEGYNFEDAVIMSERLVKDDVYTSVHLEEFESETRDTKLGPEEITREIPNVGEDALKDLDEMGIIRIGAEVKEGDILVGKVTPKGEKDLSAEERLLHAIFGDKSREVRDTSLRVPHGGDGVVCDVKIFTRANGDELQSGVNMLVRVYIAQKRKIKVGDKMAGRHGNKGVVSRIVPVEDMPYLPDGTPVDIMLNPLGVPSRMNIGQVMELHLGMAARNLGIHIATPVFDGATSDDLWETVKEAGMDSDAKTVLYDGRTGEPFDNRVSVGVMYMIKLHHMVDDKLHARSVGPYSTITQQPLGGKAQFGGQRFGEMEVWALEAYGASNVLQEILTYKSDDVTGRLKAYEAITKGKPIPKPGVPESFRVLVKELQSLGLDMRVLDKDDKEVDLRDLDEGEDDDVMHVDDLEKAREKQALEAAEFANSDEK.

Belongs to the RNA polymerase beta chain family. The RNAP catalytic core consists of 2 alpha, 1 beta, 1 beta' and 1 omega subunit. When a sigma factor is associated with the core the holoenzyme is formed, which can initiate transcription.

It carries out the reaction RNA(n) + a ribonucleoside 5'-triphosphate = RNA(n+1) + diphosphate. Functionally, DNA-dependent RNA polymerase catalyzes the transcription of DNA into RNA using the four ribonucleoside triphosphates as substrates. This chain is DNA-directed RNA polymerase subunit beta, found in Streptococcus mutans serotype c (strain ATCC 700610 / UA159).